Consider the following 239-residue polypeptide: Putative 3-methyladenine DNA glycosylase (239 aa).

It belongs to the DNA glycosylase MPG family.

The sequence is that of Putative 3-methyladenine DNA glycosylase from Pseudomonas aeruginosa (strain UCBPP-PA14).